A 335-amino-acid chain; its full sequence is MTEIATTSGARSVGLLSVGAYRPERVVTNDEICQHIDSSDEWIYTRTGIKTRRFAADDESAASMATEACRRALSNAGLSAADIDGVIVTTNTHFLQTPPAAPMVAASLGAKGILGFDLSAGCAGFGYALGAAADMIRGGGAATMLVVGTEKLSPTIDMYDRGNCFIFADGAAAVVVGETPFQGIGPTVAGSDGEQADAIRQDIDWITFAQNPSGPRPFVRLEGPAVFRWAAFKMGDVGRRAMDAAGVRPDQIDVFVPHQANSRINELLVKNLQLRPDAVVANDIEHTGNTSAASIPLAMAELLTTGAAKPGDLALLIGYGAGLSYAAQVVRMPKG.

Residues Cys122 and His258 contribute to the active site. An ACP-binding region spans residues 259–263 (QANSR). Asn289 is a catalytic residue.

It belongs to the thiolase-like superfamily. FabH family. As to quaternary structure, homodimer.

It is found in the cytoplasm. It catalyses the reaction malonyl-[ACP] + dodecanoyl-CoA + H(+) = 3-oxotetradecanoyl-[ACP] + CO2 + CoA. It participates in lipid metabolism; fatty acid biosynthesis. It functions in the pathway lipid metabolism; mycolic acid biosynthesis. In terms of biological role, catalyzes the condensation reaction of fatty acid synthesis by the addition to an acyl acceptor of two carbons from malonyl-ACP. Catalyzes the first condensation reaction which initiates fatty acid synthesis and may therefore play a role in governing the total rate of fatty acid production. Possesses both acetoacetyl-ACP synthase and acetyl transacylase activities. Its substrate specificity determines the biosynthesis of branched-chain and/or straight-chain of fatty acids. In Mycobacterium bovis (strain ATCC BAA-935 / AF2122/97), this protein is Mycobacterial beta-ketoacyl-[acyl-carrier-protein] synthase III.